Reading from the N-terminus, the 642-residue chain is MPVITLPDGSQRQFENAVSVLDVAASIGAGLAKACIAGRVNGELVDACELIETDATLSIITAKDQEGLEILRHSCAHLLGHAIKQLWPQTKMAIGPVIDNGFYYDVDLDQMLTEEDIQALEARMLELAQKDYDVVKKTVSWQEARDVFESRSETYKVAILDENIARDDKPGLYHHEEYIDMCRGPHVPNMRFCHHFKLQKTSGAYWRGDAKNKMLQRIYGTAWADKKQLNAYLQRLEEAAKRDHRKIGKQLDLYHMQEEAPGMVFWHNDGWIIFRELETFIRQKLREYDYEEVKGPFMMDRVLWERSGHWDKYADAMFTTSSENREYAIKPMNCPGHVQIFNQGLKSYRDLPLRMAEFGSCHRNEPSGSLHGLMRVRGFTQDDAHIFCAENQIQDEVSACIRMVYDTYSTFGFKNIAVKLSTRPEKRIGSDEMWDRAEEALSAALKHNNIEFDLQPGEGAFYGPKIEFTLHDCLDRAWQCGTVQLDFALPGRLGATYVGEDNDRHVPVMIHRAILGSMERFIGILTEETAGYFPLWLAPLQAVVMNITDNQADYVKEVVNTLNESGIRAKADLRNEKIGFKIREHTLKRVPYMLVCGDKEMEAGEIAVRTRRGVDLGKFKVTDLVEQLRKEISTRVLNVVEE.

Residues 1–61 (MPVITLPDGS…ETDATLSIIT (61 aa)) form the TGS domain. Residues 243–534 (DHRKIGKQLD…LTEETAGYFP (292 aa)) are catalytic. 3 residues coordinate Zn(2+): Cys334, His385, and His511.

It belongs to the class-II aminoacyl-tRNA synthetase family. As to quaternary structure, homodimer. Zn(2+) serves as cofactor.

The protein resides in the cytoplasm. It catalyses the reaction tRNA(Thr) + L-threonine + ATP = L-threonyl-tRNA(Thr) + AMP + diphosphate + H(+). Functionally, catalyzes the attachment of threonine to tRNA(Thr) in a two-step reaction: L-threonine is first activated by ATP to form Thr-AMP and then transferred to the acceptor end of tRNA(Thr). Also edits incorrectly charged L-seryl-tRNA(Thr). In Tolumonas auensis (strain DSM 9187 / NBRC 110442 / TA 4), this protein is Threonine--tRNA ligase.